The chain runs to 385 residues: Outer membrane protein P2 (385 aa).

The signal sequence occupies residues 1–20; sequence MKKTLAALIVGAFAASAANA.

It belongs to the Gram-negative porin family. Homotrimer.

The protein localises to the cell outer membrane. Its function is as follows. Forms pores that allow passive diffusion of small molecules across the outer membrane. The protein is Outer membrane protein P2 (ompP2) of Haemophilus influenzae.